We begin with the raw amino-acid sequence, 474 residues long: Eukaryotic translation initiation factor 3 subunit L (474 aa).

Residues 255–449 (DAIRMFSHIL…DLDYALQGDL (195 aa)) form the PCI domain.

Belongs to the eIF-3 subunit L family. Component of the eukaryotic translation initiation factor 3 (eIF-3) complex.

The protein localises to the cytoplasm. In terms of biological role, component of the eukaryotic translation initiation factor 3 (eIF-3) complex, which is involved in protein synthesis of a specialized repertoire of mRNAs and, together with other initiation factors, stimulates binding of mRNA and methionyl-tRNAi to the 40S ribosome. The eIF-3 complex specifically targets and initiates translation of a subset of mRNAs involved in cell proliferation. The protein is Eukaryotic translation initiation factor 3 subunit L of Chaetomium globosum (strain ATCC 6205 / CBS 148.51 / DSM 1962 / NBRC 6347 / NRRL 1970) (Soil fungus).